We begin with the raw amino-acid sequence, 511 residues long: 2-isopropylmalate synthase (511 aa).

Positions 1 to 16 (MTRKIDIFDTTLRDGE) are enriched in basic and acidic residues. The disordered stretch occupies residues 1–23 (MTRKIDIFDTTLRDGEQSPGASM). The Pyruvate carboxyltransferase domain occupies 5–268 (IDIFDTTLRD…HTDVVTQELT (264 aa)). Residues aspartate 14, histidine 203, histidine 205, and asparagine 239 each contribute to the Mn(2+) site. Positions 392–511 (ALESVQVVCG…IQTTRSKQGK (120 aa)) are regulatory domain.

Belongs to the alpha-IPM synthase/homocitrate synthase family. LeuA type 1 subfamily. In terms of assembly, homodimer. It depends on Mn(2+) as a cofactor.

It localises to the cytoplasm. The catalysed reaction is 3-methyl-2-oxobutanoate + acetyl-CoA + H2O = (2S)-2-isopropylmalate + CoA + H(+). The protein operates within amino-acid biosynthesis; L-leucine biosynthesis; L-leucine from 3-methyl-2-oxobutanoate: step 1/4. Catalyzes the condensation of the acetyl group of acetyl-CoA with 3-methyl-2-oxobutanoate (2-ketoisovalerate) to form 3-carboxy-3-hydroxy-4-methylpentanoate (2-isopropylmalate). This is 2-isopropylmalate synthase from Olsenella uli (strain ATCC 49627 / DSM 7084 / CCUG 31166 / CIP 109912 / JCM 12494 / LMG 11480 / NCIMB 702895 / VPI D76D-27C) (Lactobacillus uli).